A 233-amino-acid chain; its full sequence is 2-C-methyl-D-erythritol 4-phosphate cytidylyltransferase (233 aa).

This sequence belongs to the IspD/TarI cytidylyltransferase family. IspD subfamily.

The catalysed reaction is 2-C-methyl-D-erythritol 4-phosphate + CTP + H(+) = 4-CDP-2-C-methyl-D-erythritol + diphosphate. Its pathway is isoprenoid biosynthesis; isopentenyl diphosphate biosynthesis via DXP pathway; isopentenyl diphosphate from 1-deoxy-D-xylulose 5-phosphate: step 2/6. In terms of biological role, catalyzes the formation of 4-diphosphocytidyl-2-C-methyl-D-erythritol from CTP and 2-C-methyl-D-erythritol 4-phosphate (MEP). This Aromatoleum aromaticum (strain DSM 19018 / LMG 30748 / EbN1) (Azoarcus sp. (strain EbN1)) protein is 2-C-methyl-D-erythritol 4-phosphate cytidylyltransferase.